We begin with the raw amino-acid sequence, 433 residues long: Signal recognition particle 54 kDa protein (433 aa).

Residues 106–113 (GVEGSGKT), 186–190 (DTAGR), and 244–247 (TKMD) each bind GTP.

It belongs to the GTP-binding SRP family. SRP54 subfamily. As to quaternary structure, part of the signal recognition particle protein translocation system, which is composed of SRP and FtsY. Archaeal SRP consists of a 7S RNA molecule of 300 nucleotides and two protein subunits: SRP54 and SRP19.

It localises to the cytoplasm. It catalyses the reaction GTP + H2O = GDP + phosphate + H(+). Functionally, involved in targeting and insertion of nascent membrane proteins into the cytoplasmic membrane. Binds to the hydrophobic signal sequence of the ribosome-nascent chain (RNC) as it emerges from the ribosomes. The SRP-RNC complex is then targeted to the cytoplasmic membrane where it interacts with the SRP receptor FtsY. This is Signal recognition particle 54 kDa protein from Pyrobaculum neutrophilum (strain DSM 2338 / JCM 9278 / NBRC 100436 / V24Sta) (Thermoproteus neutrophilus).